The following is a 316-amino-acid chain: Protein lifeguard 2 (316 aa).

The disordered stretch occupies residues 1–49; sequence MTQGKLSVANKAPGTEGQQQANGEKKDAPAVPSAPPSYEEATSGEGLKA. Helical transmembrane passes span 106–126, 138–158, and 165–185; these read VYTI…LFTF, PGWY…LACC, and FPWN…LTGM. Asn-191 carries N-linked (GlcNAc...) asparagine glycosylation. Helical transmembrane passes span 194–214, 225–245, 251–271, and 290–310; these read SVLL…IFSF, GVLF…AILL, PWLH…FLAF, and IFGA…FLQL.

It belongs to the BI1 family. LFG subfamily. Interacts with FAS/TNFRSF6 and BAX. Expressed at high levels on dendrites and to a lesser extent on the soma and axons of neurons in various regions of brain.

Its subcellular location is the cell membrane. The protein localises to the membrane raft. The protein resides in the postsynaptic cell membrane. In terms of biological role, antiapoptotic protein which protects cells uniquely from Fas-induced apoptosis. Regulates Fas-mediated apoptosis in neurons by interfering with caspase-8 activation. Plays a role in cerebellar development by affecting cerebellar size, internal granular layer (IGL) thickness, and Purkinje cell (PC) development. The chain is Protein lifeguard 2 (Faim2) from Rattus norvegicus (Rat).